The primary structure comprises 337 residues: Sorting nexin-15 (337 aa).

The region spanning 1-130 (MSRQAKDDFL…EFFRGGEVTR (130 aa)) is the PX domain. A 1,2-diacyl-sn-glycero-3-phospho-(1D-myo-inositol-3-phosphate) is bound by residues Arg51, Ser53, Arg87, and Arg96. At Arg105 the chain carries Omega-N-methylarginine. The disordered stretch occupies residues 133–156 (EVSRDLRILPPPLIPTPPPDEARL). Residues 141 to 151 (LPPPLIPTPPP) show a composition bias toward pro residues. Ser201 and Ser227 each carry phosphoserine. The interval 244-270 (LDQEPWEPGGQEEEEAEDGEPAPAYLG) is disordered. A compositionally biased stretch (acidic residues) spans 253–263 (GQEEEEAEDGE). Positions 265-337 (APAYLGQATE…RAEMLHTHLP (73 aa)) constitute an MIT domain.

Belongs to the sorting nexin family. In terms of assembly, homodimer. Interacts with SNX1, SNX2 and SNX4.

The protein localises to the cytoplasm. It is found in the membrane. It localises to the cytoplasmic vesicle membrane. May be involved in several stages of intracellular trafficking. Overexpression of SNX15 disrupts the normal trafficking of proteins from the plasma membrane to recycling endosomes or the TGN. The chain is Sorting nexin-15 (Snx15) from Mus musculus (Mouse).